The primary structure comprises 121 residues: uncharacterized protein (121 aa).

The interval Asn-85 to Ser-111 is disordered. Residues Ile-100–Ser-111 show a composition bias toward polar residues.

This is an uncharacterized protein from Dictyostelium discoideum (Social amoeba).